Here is a 654-residue protein sequence, read N- to C-terminus: Fimbrin-2 (654 aa).

4 Calponin-homology (CH) domains span residues 124–241, 269–372, 394–500, and 515–623; these read DSEK…KIQL, LPPE…QHRN, SREE…RYNI, and EITD…YWTL. Actin-binding regions lie at residues 124 to 372 and 394 to 623; these read DSEK…QHRN and SREE…YWTL.

As to quaternary structure, interacts with F-actin.

Its subcellular location is the cytoplasm. The protein localises to the cytoskeleton. Cross-links actin filaments (F-actin). Stabilizes and prevents F-actin depolymerization mediated by profilin. May regulate actin cytoarchitecture, cell cycle, cell division, cell elongation and cytoplasmic tractus. The chain is Fimbrin-2 from Arabidopsis thaliana (Mouse-ear cress).